The following is a 429-amino-acid chain: UPF0761 membrane protein ABO_1543 (429 aa).

The next 6 helical transmembrane spans lie at 45 to 65 (LFAI…VPAL), 102 to 122 (LTVL…STVE), 141 to 161 (LLMY…GLAI), 184 to 204 (WLAV…YTVV), 216 to 236 (LGAA…TFFI), and 256 to 278 (LLWI…ALVV).

This sequence belongs to the UPF0761 family.

It localises to the cell inner membrane. This chain is UPF0761 membrane protein ABO_1543, found in Alcanivorax borkumensis (strain ATCC 700651 / DSM 11573 / NCIMB 13689 / SK2).